We begin with the raw amino-acid sequence, 101 residues long: Small ribosomal subunit protein uS14 (101 aa).

The segment at 1 to 20 is disordered; the sequence is MAKTSAVEKNKRRRKLVANH. Residues 10 to 20 show a composition bias toward basic residues; sequence NKRRRKLVANH.

It belongs to the universal ribosomal protein uS14 family. Part of the 30S ribosomal subunit. Contacts proteins S3 and S10.

Functionally, binds 16S rRNA, required for the assembly of 30S particles and may also be responsible for determining the conformation of the 16S rRNA at the A site. The protein is Small ribosomal subunit protein uS14 of Sinorhizobium medicae (strain WSM419) (Ensifer medicae).